We begin with the raw amino-acid sequence, 356 residues long: Probable arabinogalactan endo-beta-1,4-galactanase A (356 aa).

Positions 1–21 (MLGKTVLLPLLVLLCHSLASA) are cleaved as a signal peptide. Asparagine 133 is a glycosylation site (N-linked (GlcNAc...) asparagine). Catalysis depends on glutamate 157, which acts as the Proton donor. Glutamate 268 functions as the Nucleophile in the catalytic mechanism.

It belongs to the glycosyl hydrolase 53 family.

It localises to the secreted. It carries out the reaction The enzyme specifically hydrolyzes (1-&gt;4)-beta-D-galactosidic linkages in type I arabinogalactans.. Endogalactanase involved in the degradation of plant cell wall polysaccharides, and more particularly of hairy regions of pectin. This Aspergillus fumigatus (strain ATCC MYA-4609 / CBS 101355 / FGSC A1100 / Af293) (Neosartorya fumigata) protein is Probable arabinogalactan endo-beta-1,4-galactanase A (galA).